The chain runs to 447 residues: Trigger factor (447 aa).

The region spanning 164 to 249 is the PPIase FKBP-type domain; the sequence is GNQVTFDFEG…VKLVEKSKLP (86 aa).

Belongs to the FKBP-type PPIase family. Tig subfamily.

Its subcellular location is the cytoplasm. The enzyme catalyses [protein]-peptidylproline (omega=180) = [protein]-peptidylproline (omega=0). Its function is as follows. Involved in protein export. Acts as a chaperone by maintaining the newly synthesized protein in an open conformation. Functions as a peptidyl-prolyl cis-trans isomerase. The sequence is that of Trigger factor from Psychrobacter arcticus (strain DSM 17307 / VKM B-2377 / 273-4).